A 487-amino-acid chain; its full sequence is UDP-N-acetylmuramoyl-L-alanyl-D-glutamate--2,6-diaminopimelate ligase (487 aa).

Ser30 is a UDP-N-acetyl-alpha-D-muramoyl-L-alanyl-D-glutamate binding site. Position 109–115 (109–115 (GTNGKTS)) interacts with ATP. UDP-N-acetyl-alpha-D-muramoyl-L-alanyl-D-glutamate-binding positions include 151-152 (TT), Ser178, and Arg186. An N6-carboxylysine modification is found at Lys218. Residues Arg379, 403 to 406 (DNPR), Gly455, and Glu459 contribute to the meso-2,6-diaminopimelate site. A Meso-diaminopimelate recognition motif motif is present at residues 403 to 406 (DNPR).

The protein belongs to the MurCDEF family. MurE subfamily. Mg(2+) is required as a cofactor. In terms of processing, carboxylation is probably crucial for Mg(2+) binding and, consequently, for the gamma-phosphate positioning of ATP.

It is found in the cytoplasm. It catalyses the reaction UDP-N-acetyl-alpha-D-muramoyl-L-alanyl-D-glutamate + meso-2,6-diaminopimelate + ATP = UDP-N-acetyl-alpha-D-muramoyl-L-alanyl-gamma-D-glutamyl-meso-2,6-diaminopimelate + ADP + phosphate + H(+). The protein operates within cell wall biogenesis; peptidoglycan biosynthesis. Its function is as follows. Catalyzes the addition of meso-diaminopimelic acid to the nucleotide precursor UDP-N-acetylmuramoyl-L-alanyl-D-glutamate (UMAG) in the biosynthesis of bacterial cell-wall peptidoglycan. In Alkaliphilus oremlandii (strain OhILAs) (Clostridium oremlandii (strain OhILAs)), this protein is UDP-N-acetylmuramoyl-L-alanyl-D-glutamate--2,6-diaminopimelate ligase.